The chain runs to 1086 residues: DNA polymerase delta catalytic subunit (1086 aa).

A disordered region spans residues 1 to 64 (MTDRSSNEGV…KTSSFEDELA (64 aa)). Over residues 29-58 (EITDVKRRRLSERNGYGDKKGSSSKEKTSS) the composition is skewed to basic and acidic residues. Positions 993, 996, 1008, and 1011 each coordinate Zn(2+). A CysA-type zinc finger spans residues 993-1011 (CLGCKAPIKKGKTALCENC). 4 residues coordinate [4Fe-4S] cluster: C1040, C1043, C1053, and C1058. Positions 1040 to 1058 (CQRCQGSMHQDVICTSRDC) match the CysB motif motif.

Belongs to the DNA polymerase type-B family. As to quaternary structure, heterotetramer that consist of the pol3, cdc1, cdc27 and cdm1 subunits. The pol3 subunit contains the polymerase active site and most likely the active site for the 3'-5' exonuclease activity. [4Fe-4S] cluster serves as cofactor.

The protein resides in the nucleus. It catalyses the reaction DNA(n) + a 2'-deoxyribonucleoside 5'-triphosphate = DNA(n+1) + diphosphate. Functionally, catalytic component of DNA polymerase delta (DNA polymerase III) which participates in chromosomal DNA replication. Required during synthesis of the lagging DNA strands at the replication fork, binds at/or near replication origins and moves along DNA with the replication fork. Participates in leading strand synthesis during replication initiation and termination. Has 3'-5' proofreading exonuclease activity that corrects errors arising during DNA replication. The sequence is that of DNA polymerase delta catalytic subunit (pol3) from Schizosaccharomyces pombe (strain 972 / ATCC 24843) (Fission yeast).